The sequence spans 428 residues: 3-phosphoshikimate 1-carboxyvinyltransferase (428 aa).

The 3-phosphoshikimate site is built by Lys23, Ser24, and Arg28. Lys23 is a phosphoenolpyruvate binding site. Phosphoenolpyruvate contacts are provided by Gly97 and Arg125. 3-phosphoshikimate is bound by residues Ser170, Ser171, Gln172, Ser198, Asp314, Asn337, and Lys341. Gln172 provides a ligand contact to phosphoenolpyruvate. Catalysis depends on Asp314, which acts as the Proton acceptor. Residues Arg345, Arg387, and Lys412 each coordinate phosphoenolpyruvate.

Belongs to the EPSP synthase family. In terms of assembly, monomer.

It localises to the cytoplasm. The catalysed reaction is 3-phosphoshikimate + phosphoenolpyruvate = 5-O-(1-carboxyvinyl)-3-phosphoshikimate + phosphate. Its pathway is metabolic intermediate biosynthesis; chorismate biosynthesis; chorismate from D-erythrose 4-phosphate and phosphoenolpyruvate: step 6/7. Catalyzes the transfer of the enolpyruvyl moiety of phosphoenolpyruvate (PEP) to the 5-hydroxyl of shikimate-3-phosphate (S3P) to produce enolpyruvyl shikimate-3-phosphate and inorganic phosphate. The sequence is that of 3-phosphoshikimate 1-carboxyvinyltransferase from Serratia proteamaculans (strain 568).